Reading from the N-terminus, the 206-residue chain is Small ribosomal subunit protein uS4c (206 aa).

An S4 RNA-binding domain is found at 93 to 161 (MRLDNIVYRL…IEKNIELLDK (69 aa)).

The protein belongs to the universal ribosomal protein uS4 family. In terms of assembly, part of the 30S ribosomal subunit. Contacts protein S5. The interaction surface between S4 and S5 is involved in control of translational fidelity.

It is found in the plastid. Its function is as follows. One of the primary rRNA binding proteins, it binds directly to 16S rRNA where it nucleates assembly of the body of the 30S subunit. With S5 and S12 plays an important role in translational accuracy. This chain is Small ribosomal subunit protein uS4c (rps4), found in Euglena longa (Euglenophycean alga).